We begin with the raw amino-acid sequence, 156 residues long: Small ribosomal subunit protein uS7 (156 aa).

Belongs to the universal ribosomal protein uS7 family. In terms of assembly, part of the 30S ribosomal subunit. Contacts proteins S9 and S11.

In terms of biological role, one of the primary rRNA binding proteins, it binds directly to 16S rRNA where it nucleates assembly of the head domain of the 30S subunit. Is located at the subunit interface close to the decoding center, probably blocks exit of the E-site tRNA. This chain is Small ribosomal subunit protein uS7, found in Lawsonia intracellularis (strain PHE/MN1-00).